Here is a 305-residue protein sequence, read N- to C-terminus: MRIVFMGTPSFAEVILRALVENEDKKIEVVGLFTQRDKPFGRKKELKAPETKTYILENHLNIPIFQPQSLKEPEVQILKGLKPDFIVVVAYGKILPKEVLTIAPCINLHASLLPKYRGASPIHEMILNDDRIYGISTMLMDLELDSGDILESASFLREDYLDLDALSLKLARMGATLLLSTLKNFHSITRKPQDHMQASFCKKIAKADGLVGFKDAKNLFLKSLAFKSWPEIFLENSLKLLEVELVENEKSHKEGEILAIDERGVLVGCLKGSVRIARLQAVGKKPLKAKDYLNGRRLKVGGILT.

111 to 114 (SLLP) is a (6S)-5,6,7,8-tetrahydrofolate binding site.

The protein belongs to the Fmt family.

It carries out the reaction L-methionyl-tRNA(fMet) + (6R)-10-formyltetrahydrofolate = N-formyl-L-methionyl-tRNA(fMet) + (6S)-5,6,7,8-tetrahydrofolate + H(+). Its function is as follows. Attaches a formyl group to the free amino group of methionyl-tRNA(fMet). The formyl group appears to play a dual role in the initiator identity of N-formylmethionyl-tRNA by promoting its recognition by IF2 and preventing the misappropriation of this tRNA by the elongation apparatus. In Helicobacter pylori (strain J99 / ATCC 700824) (Campylobacter pylori J99), this protein is Methionyl-tRNA formyltransferase.